A 361-amino-acid chain; its full sequence is MAQPGDPRRLCRLVQEGRLRALKEELQAAGGCPGPAGDTLLHCAARHGHRDVLAYLAEAWGMDIEATNRDYKRPLHEAASMGHRDCVRYLLGRGAAVDCLKKADWTPLMMACTRKNLGVIQELVEHGANPLLKNKDGWNSFHIASREGDPLILQYLLTVCPGAWKTESKIRRTPLHTAAMHGHLEAVKVLLKRCQYEPDYRDNCGVTALMDAIQCGHIDVARLLLDEHGACLSAEDSLGAQALHRAAVTGQDEAIRFLVSELGVDVDVRATSTHLTALHYAAKEGHTSTIQTLLSLGADINSKDEKNRSALHLACAGQHLACAKFLLQSGLKDSEDITGTLAQQLPRRADVLQGSGHSAMT.

ANK repeat units follow at residues 36-66, 70-99, 103-132, 136-165, 170-200, 204-234, 238-268, 273-302, and 306-335; these read AGDT…DIEA, DYKR…AVDC, ADWT…NPLL, DGWN…GAWK, IRRT…EPDY, CGVT…CLSA, LGAQ…DVDV, THLT…DINS, and KNRS…KDSE.

In terms of assembly, interacts with AARS; the interaction is direct.

It localises to the cytoplasm. It is found in the nucleus. Functionally, required to prevent the misactivation of serine (Ser) with tRNA(Ala) by promoting the hydrolysis of Ser-mischarged tRNA(Ala), thereby playing a role in translational fidelity. Binds directly to the catalytic domain of AARS/AlaRS and captures Ser that is misactivated by AARS/AlaRS, preventing the charging of Ser adenylates to tRNA(Ala) and precluding Ser misincorporation in nascent peptides. This Homo sapiens (Human) protein is Ankyrin repeat domain-containing protein 16.